The chain runs to 495 residues: Mothers against decapentaplegic homolog 6 (495 aa).

The span at 1-15 (MFRSKRSGLVRRLWR) shows a compositional bias: basic residues. Disordered stretches follow at residues 1–115 (MFRS…PGWL) and 133–161 (AAGA…RSRE). Dimethylated arginine; alternate occurs at positions 74 and 81. Residues Arg74 and Arg81 each carry the omega-N-methylarginine; alternate modification. The 128-residue stretch at 149–276 (PEPEEGGGPR…FSRLCGPESP (128 aa)) folds into the MH1 domain. A Glycyl lysine isopeptide (Lys-Gly) (interchain with G-Cter in ubiquitin) cross-link involves residue Lys174. Zn(2+)-binding residues include Cys206, Cys248, Cys261, and His266. In terms of domain architecture, MH2 spans 332–495 (WCSVAYWEHR…WLEILLNNHR (164 aa)). At Ser436 the chain carries Phosphoserine; by PRKX; in vitro.

Belongs to the dwarfin/SMAD family. Interacts with NEDD4L. Interacts with WWP1. Interacts with STAMBP and PRKX. Interacts with RNF111 and AXIN1. Interacts with TGF-beta type I receptor superfamily members, including ACVR1B, BMPR1B and TGFBR1. In response to BMP2 treatment, interacts with SMAD1; this interaction may inhibit SMAD1-binding to SMAD4. Interacts with HOXC8 and HOXC9. Interacts with PELI1; this interaction interferes with PELI1 complex formation with TRAF6, IRAK1, IRAK4 and MYD88 in response to IL1B and hence negatively regulates IL1R-TLR signaling. Interacts with TSC22D1/TSC-22. Monoubiquitinated at Lys-174 by the E2/E3 hybrid ubiquitin-protein ligase UBE2O, leading to reduced binding affinity for the activated BMP type I receptor ACVR1/ALK2, thereby enhancing BMP7 and regulating adipocyte differentiation. Ubiquitinated by WWP1. Ubiquitinated by ARK2C, promoting proteasomal degradation, leading to enhance the BMP-Smad signaling. Post-translationally, arginine methylation by PRMT1, which is recruited by BMPR2, initiates BMP-Induced signaling and induces dissociation from the BMPR1B receptor at the cell surface leading to derepress downstream Smad1/Smad5 signaling. In terms of processing, phosphorylated by BMP type 1 receptor kinase and by PRKX. As to expression, ubiquitous in various organs, with higher levels in lung.

Its subcellular location is the nucleus. Transforming growth factor-beta superfamily receptors signaling occurs through the Smad family of intracellular mediators. SMAD6 is an inhibitory Smad (i-Smad) that negatively regulates signaling downstream of type I transforming growth factor-beta. Acts as a mediator of TGF-beta and BMP anti-inflammatory activities. Suppresses IL1R-TLR signaling through its direct interaction with PEL1, preventing NF-kappa-B activation, nuclear transport and NF-kappa-B-mediated expression of pro-inflammatory genes. Blocks the BMP-SMAD1 signaling pathway by competing with SMAD4 for receptor-activated SMAD1-binding. Binds to regulatory elements in target promoter regions. This chain is Mothers against decapentaplegic homolog 6 (Smad6), found in Mus musculus (Mouse).